A 480-amino-acid chain; its full sequence is Cytochrome P450 monooxygenase ORF11 (480 aa).

The helical transmembrane segment at 9-29 (LLLLPHLSALTPKTGFLIGLA) threads the bilayer. 2 N-linked (GlcNAc...) asparagine glycosylation sites follow: Asn-265 and Asn-352. Heme is bound at residue Cys-449.

The protein belongs to the cytochrome P450 family. The cofactor is heme.

It localises to the membrane. It participates in sesquiterpene biosynthesis. Its function is as follows. Cytochrome P450 monooxygenase; part of the gene cluster that mediates the biosynthesis of PR-toxin, a bicyclic sesquiterpene belonging to the eremophilane class and acting as a mycotoxin. The first step of the pathway is catalyzed by the aristolochene synthase which performs the cyclization of trans,trans-farnesyl diphosphate (FPP) to the bicyclic sesquiterpene aristolochene. Following the formation of aristolochene, the non-oxygenated aristolochene is converted to the trioxygenated intermediate eremofortin B, via 7-epi-neopetasone. This conversion appears to involve three enzymes, a hydroxysterol oxidase-like enzyme, the quinone-oxidase prx3 that forms the quinone-type-structure in the bicyclic nucleus of aristolochene with the C8-oxo group and the C-3 hydroxyl group, and the P450 monooxygenase ORF6 that introduces the epoxide at the double bond between carbons 1 and 2. No monoxy or dioxy-intermediates have been reported to be released to the broth, so these three early oxidative reactions may be coupled together. Eremofortin B is further oxidized by another P450 monooxygenase, that introduces a second epoxide between carbons 7 and 11 prior to acetylation to eremofortin A by the acetyltransferase ORF8. The second epoxidation may be performed by a second P450 monooxygenase. After the acetylation step, eremofortin A is converted to eremofortin C and then to PR-toxin. First the conversion of eremofortin A to eremofortin C proceeds by oxidation of the side chain of the molecule at C-12 and is catalyzed by the short-chain oxidoreductase prx1. The cytochrome P450 monooxygenase ORF6 is probably also involved in this step. The primary alcohol formed at C-12 is finally oxidized by the short-chain alcohol dehydrogenase prx4 that forms PR-toxin. The polypeptide is Cytochrome P450 monooxygenase ORF11 (Penicillium roqueforti (strain FM164)).